The following is a 185-amino-acid chain: Ribosome-recycling factor (185 aa).

The protein belongs to the RRF family.

Its subcellular location is the cytoplasm. In terms of biological role, responsible for the release of ribosomes from messenger RNA at the termination of protein biosynthesis. May increase the efficiency of translation by recycling ribosomes from one round of translation to another. This is Ribosome-recycling factor from Corynebacterium jeikeium (strain K411).